Consider the following 462-residue polypeptide: L-seryl-tRNA(Sec) selenium transferase (462 aa).

The residue at position 293 (lysine 293) is an N6-(pyridoxal phosphate)lysine.

The protein belongs to the SelA family. It depends on pyridoxal 5'-phosphate as a cofactor.

The protein localises to the cytoplasm. The enzyme catalyses L-seryl-tRNA(Sec) + selenophosphate + H(+) = L-selenocysteinyl-tRNA(Sec) + phosphate. It functions in the pathway aminoacyl-tRNA biosynthesis; selenocysteinyl-tRNA(Sec) biosynthesis; selenocysteinyl-tRNA(Sec) from L-seryl-tRNA(Sec) (bacterial route): step 1/1. In terms of biological role, converts seryl-tRNA(Sec) to selenocysteinyl-tRNA(Sec) required for selenoprotein biosynthesis. The protein is L-seryl-tRNA(Sec) selenium transferase of Clostridium botulinum (strain ATCC 19397 / Type A).